The following is a 146-amino-acid chain: UPF0178 protein BCAH820_3075 (146 aa).

It belongs to the UPF0178 family.

The chain is UPF0178 protein BCAH820_3075 from Bacillus cereus (strain AH820).